A 578-amino-acid chain; its full sequence is MRPALGHPRSVSSASGSFPPPPAAARLQPLFLRGGSFRGRRGSGDSSTSTSTSRGGGGGRRGGGGGSPSSSTGAEREDDDESLSVSKPLVPNAALLGPPAQVGAPAGPAPVAFSSSAATSSSTSTPTSSCSMTAADFGGGAAAGAVGGPGSRSAGGAGGTGTGSGASCCPCCCCCGCPDRPGRRGRRRGCAPSPRCRWGYQALSVVLLLAQGGLLDLYLIAVTDLYWCSWIATDLVVVVGWAIFFAKNSRGRRGGAASGAHNHHLHHHHAAPPLHLPAPSAATAGAKARGARGGAGGAGGGLGAAAAAGEFAFAYLAWLIYSIAFTPKVVLILGTSILDLIELRAPFGTTGFRLTMALSVPLLYSLVRAISEAGAPPGSAGPLLLQPQRHRAAGCFLGTCLDLLDSFTLVELMLEGRVPLPAHLRYLLIAVYFLTLASPVLWLYELNAAAAAAASWGQASGPGSCSRLLRLLGGCLVDVPLLALRCLLVVSYQQPLSIFMLKNLFFLGCRGLEALEGCWDRGNRASPSRARGGYGAPPSAPPPPPPPPQGGSQLGHCISENEGGAHGYVNTLAVASQN.

Disordered stretches follow at residues 1–84 (MRPA…ESLS) and 106–129 (AGPAPVAFSSSAATSSSTSTPTSS). 2 stretches are compositionally biased toward low complexity: residues 8–17 (PRSVSSASGS) and 44–53 (GDSSTSTSTS). Residues 54–67 (RGGGGGRRGGGGGS) are compositionally biased toward gly residues. S167 is modified (phosphoserine). Positions 529 to 557 (RARGGYGAPPSAPPPPPPPPQGGSQLGHC) are disordered. Residues 538–549 (PSAPPPPPPPPQ) show a composition bias toward pro residues. The residue at position 552 (S552) is a Phosphoserine.

It belongs to the TMEM121 family. As to expression, widely expressed, especially in adult heart, brain, prostate, testes, peripherical blood leukocytes and fetal brain.

The polypeptide is Transmembrane protein 121B (Homo sapiens (Human)).